A 313-amino-acid chain; its full sequence is D-alanine--D-alanine ligase (313 aa).

The 201-residue stretch at 108–308 (KLVWQQTGVP…YSELVVKVLS (201 aa)) folds into the ATP-grasp domain. 138–193 (VAKLGLPLFVKPASEGSSVAVLKVKTADALPAALAEAATHDKIVIVEKSIEGGGEY) contributes to the ATP binding site. Residues D262, E275, and N277 each coordinate Mg(2+).

This sequence belongs to the D-alanine--D-alanine ligase family. The cofactor is Mg(2+). Mn(2+) is required as a cofactor.

The protein localises to the cytoplasm. The enzyme catalyses 2 D-alanine + ATP = D-alanyl-D-alanine + ADP + phosphate + H(+). Its pathway is cell wall biogenesis; peptidoglycan biosynthesis. Functionally, cell wall formation. The polypeptide is D-alanine--D-alanine ligase (Burkholderia multivorans (strain ATCC 17616 / 249)).